The following is a 1097-amino-acid chain: DNA-directed RNA polymerase subunit beta (1097 aa).

The segment at 1072 to 1097 (QDINPRRNTPSRPTYESLGTSEYEED) is disordered. Residues 1077–1091 (RRNTPSRPTYESLGT) show a composition bias toward polar residues.

It belongs to the RNA polymerase beta chain family. In cyanobacteria the RNAP catalytic core is composed of 2 alpha, 1 beta, 1 beta', 1 gamma and 1 omega subunit. When a sigma factor is associated with the core the holoenzyme is formed, which can initiate transcription.

The catalysed reaction is RNA(n) + a ribonucleoside 5'-triphosphate = RNA(n+1) + diphosphate. In terms of biological role, DNA-dependent RNA polymerase catalyzes the transcription of DNA into RNA using the four ribonucleoside triphosphates as substrates. In Prochlorococcus marinus (strain AS9601), this protein is DNA-directed RNA polymerase subunit beta.